The sequence spans 285 residues: Golgi phosphoprotein 3-like (285 aa).

Residues 1-43 are disordered; that stretch reads MTTLTHRTRRTEVSKSSEKKIESEEDTNQERSPDNEDPGDSKD. The span at 10–43 shows a compositional bias: basic and acidic residues; that stretch reads RTEVSKSSEKKIESEEDTNQERSPDNEDPGDSKD. A 1,2-diacyl-sn-glycero-3-phospho-(1D-myo-inositol 4-phosphate)-binding residues include Trp-67 and Arg-76. The residue at position 112 (Ser-112) is a Phosphoserine. A 1,2-diacyl-sn-glycero-3-phospho-(1D-myo-inositol 4-phosphate)-binding residues include Arg-157 and Arg-160. Positions 176 to 187 are beta-hairpin required for oligomerization; that stretch reads EKQNFLLFDMTT.

Belongs to the GOLPH3/VPS74 family. Homooligomer. Does not interact MYO18; differs from GOLPH3 by its inability to interact with MYO18. May interact with ARF1. As to expression, expressed in a subset of tissues tested with higher expression in salivary gland, small intestine and skin (at protein level).

The protein resides in the golgi apparatus. Its subcellular location is the golgi stack membrane. The protein localises to the trans-Golgi network membrane. Phosphatidylinositol-4-phosphate-binding protein that may antagonize the action of GOLPH3 which is required for the process of vesicle budding at the Golgi and anterograde transport to the plasma membrane. This Mus musculus (Mouse) protein is Golgi phosphoprotein 3-like (Golph3l).